Reading from the N-terminus, the 35-residue chain is Mu/omega-theraphotoxin-Tap1a (35 aa).

Intrachain disulfides connect Cys-3-Cys-18, Cys-10-Cys-23, and Cys-17-Cys-30.

Belongs to the neurotoxin 10 (Hwtx-1) family. 59 (Tltx) subfamily. As to expression, expressed by the venom gland.

The protein resides in the secreted. Gating-modifier toxin that inhibits both sodium (Nav) and calcium (Cav3) channels by inducing hyperpolarizing shift in voltage-dependence of activation and steady state inactivation. Inhibits Nav1.1/SCN1A, Nav1.2/SCN2A, Nav1.3/SCN3A, Nav1.6/SCN6A, Nav1.7/SCN9A and Cav3.1/CACNA1G sodium and calcium channels at nanomolar concentrations (IC(50)=81-301 nM). Surprisingly, selectively slows fast inactivation of Nav1.3/SCN3A. Also shows moderate inhibition of Cav3.2/CACNA1H calcium channels (IC(50)=1233 nM). Ex vivo, nearly ablates neuronal mechanosensitivity in afferent fibers innervating the colon and the bladder. In vivo, in a mouse model of irritable bowel syndrome, intracolonic administration of the toxin reverses colonic mechanical hypersensitivity. This chain is Mu/omega-theraphotoxin-Tap1a, found in Theraphosa apophysis (Goliath pinkfoot tarantula).